Consider the following 365-residue polypeptide: Uroporphyrinogen decarboxylase (365 aa).

Over residues 1-17 the composition is skewed to polar residues; sequence MSANDSPSGQQTTTSAS. The interval 1 to 20 is disordered; it reads MSANDSPSGQQTTTSASLDA. Substrate contacts are provided by residues 48–52, aspartate 97, tyrosine 172, serine 227, and histidine 341; that span reads RQAGR.

The protein belongs to the uroporphyrinogen decarboxylase family. As to quaternary structure, homodimer.

It localises to the cytoplasm. It catalyses the reaction uroporphyrinogen III + 4 H(+) = coproporphyrinogen III + 4 CO2. It participates in porphyrin-containing compound metabolism; protoporphyrin-IX biosynthesis; coproporphyrinogen-III from 5-aminolevulinate: step 4/4. In terms of biological role, catalyzes the decarboxylation of four acetate groups of uroporphyrinogen-III to yield coproporphyrinogen-III. This chain is Uroporphyrinogen decarboxylase, found in Streptomyces griseus subsp. griseus (strain JCM 4626 / CBS 651.72 / NBRC 13350 / KCC S-0626 / ISP 5235).